We begin with the raw amino-acid sequence, 396 residues long: Subtilisin-like protease 5 (396 aa).

A signal peptide spans M1–A20. Positions A21 to H116 are excised as a propeptide. In terms of domain architecture, Inhibitor I9 spans Y37 to I113. The N-linked (GlcNAc...) asparagine glycan is linked to N63. In terms of domain architecture, Peptidase S8 spans P125–R396. Active-site charge relay system residues include D156 and H187. 2 N-linked (GlcNAc...) asparagine glycosylation sites follow: N230 and N248. The active-site Charge relay system is S342. Residues P376–L389 show a composition bias toward polar residues. Residues P376–R396 form a disordered region. N392 carries N-linked (GlcNAc...) asparagine glycosylation.

It belongs to the peptidase S8 family.

It localises to the secreted. In terms of biological role, secreted subtilisin-like serine protease with keratinolytic activity that contributes to pathogenicity. The protein is Subtilisin-like protease 5 (SUB5) of Trichophyton tonsurans (Scalp ringworm fungus).